The primary structure comprises 418 residues: MDRFIIRGGRRLTGEIEIGGAKNSGLKLMVAGLLTSERLVLSNVPAIADIKTMRDLLVGLGITVEDAGPRTLSIGGEIGSVEAPYDIVSKMRASILVLGPLLARAREAKVSLPGGCAIGTRPVDMHLKGLETLGAEIRLENGYINATAPDGLKGDRIILPFASVGATENLLMAATLAKGRTHIVNAAREPEISDLVHCLNAMGAQITGEGSGTLVIDGVEKLHGAHYAVMPDRIECGTYACAAGITGGDLLLVGGRADDLGAVIRTLEETGVEVLEEERGLRVRRSGTLQGVDIMTEPYPGFPTDMQAQFMAMLSVAEGASMITETIFENRFMHVPELNRMGARVNVHGRSAIIRGVPKLSGAPVMATDLRASFSLILAGLAAEGETQLSRIYHLDRGYEGVDRKLAACGADIARVSD.

22 to 23 serves as a coordination point for phosphoenolpyruvate; the sequence is KN. Arginine 92 is a binding site for UDP-N-acetyl-alpha-D-glucosamine. Catalysis depends on cysteine 116, which acts as the Proton donor. Cysteine 116 bears the 2-(S-cysteinyl)pyruvic acid O-phosphothioketal mark. Aspartate 305 and isoleucine 327 together coordinate UDP-N-acetyl-alpha-D-glucosamine.

This sequence belongs to the EPSP synthase family. MurA subfamily.

It is found in the cytoplasm. It catalyses the reaction phosphoenolpyruvate + UDP-N-acetyl-alpha-D-glucosamine = UDP-N-acetyl-3-O-(1-carboxyvinyl)-alpha-D-glucosamine + phosphate. Its pathway is cell wall biogenesis; peptidoglycan biosynthesis. Functionally, cell wall formation. Adds enolpyruvyl to UDP-N-acetylglucosamine. The protein is UDP-N-acetylglucosamine 1-carboxyvinyltransferase of Gluconobacter oxydans (strain 621H) (Gluconobacter suboxydans).